The primary structure comprises 251 residues: Pyrroloquinoline-quinone synthase (251 aa).

Belongs to the PqqC family.

It catalyses the reaction 6-(2-amino-2-carboxyethyl)-7,8-dioxo-1,2,3,4,7,8-hexahydroquinoline-2,4-dicarboxylate + 3 O2 = pyrroloquinoline quinone + 2 H2O2 + 2 H2O + H(+). The protein operates within cofactor biosynthesis; pyrroloquinoline quinone biosynthesis. Ring cyclization and eight-electron oxidation of 3a-(2-amino-2-carboxyethyl)-4,5-dioxo-4,5,6,7,8,9-hexahydroquinoline-7,9-dicarboxylic-acid to PQQ. This chain is Pyrroloquinoline-quinone synthase, found in Klebsiella pneumoniae (strain 342).